The primary structure comprises 190 residues: Probable nicotinate-nucleotide adenylyltransferase (190 aa).

This sequence belongs to the NadD family.

The enzyme catalyses nicotinate beta-D-ribonucleotide + ATP + H(+) = deamido-NAD(+) + diphosphate. The protein operates within cofactor biosynthesis; NAD(+) biosynthesis; deamido-NAD(+) from nicotinate D-ribonucleotide: step 1/1. Its function is as follows. Catalyzes the reversible adenylation of nicotinate mononucleotide (NaMN) to nicotinic acid adenine dinucleotide (NaAD). The chain is Probable nicotinate-nucleotide adenylyltransferase from Frankia casuarinae (strain DSM 45818 / CECT 9043 / HFP020203 / CcI3).